Here is a 752-residue protein sequence, read N- to C-terminus: Photosystem I P700 chlorophyll a apoprotein A1 (752 aa).

A run of 8 helical transmembrane segments spans residues 73–96, 159–182, 198–222, 294–312, 349–372, 388–414, 436–458, and 533–551; these read IFSA…FHGA, LYVT…FHYH, MNHH…HVSL, RAHH…GHMY, WHAQ…HHMY, LCLF…IFMV, AIIS…LYIH, and FLVH…LILL. Residues Cys575 and Cys584 each contribute to the [4Fe-4S] cluster site. 2 helical membrane passes run 591 to 612 and 666 to 688; these read HVFL…HFSW and LSAY…MFLF. His677 provides a ligand contact to chlorophyll a'. The chlorophyll a site is built by Met685 and Tyr693. Trp694 lines the phylloquinone pocket. The helical transmembrane segment at 726 to 746 threads the bilayer; the sequence is AVGVAHYLLGGIATTWSFFHA.

The protein belongs to the PsaA/PsaB family. In terms of assembly, the PsaA/B heterodimer binds the P700 chlorophyll special pair and subsequent electron acceptors. PSI consists of a core antenna complex that captures photons, and an electron transfer chain that converts photonic excitation into a charge separation. The eukaryotic PSI reaction center is composed of at least 11 subunits. P700 is a chlorophyll a/chlorophyll a' dimer, A0 is one or more chlorophyll a, A1 is one or both phylloquinones and FX is a shared 4Fe-4S iron-sulfur center. serves as cofactor.

Its subcellular location is the plastid. It localises to the cyanelle thylakoid membrane. It carries out the reaction reduced [plastocyanin] + hnu + oxidized [2Fe-2S]-[ferredoxin] = oxidized [plastocyanin] + reduced [2Fe-2S]-[ferredoxin]. Functionally, psaA and PsaB bind P700, the primary electron donor of photosystem I (PSI), as well as the electron acceptors A0, A1 and FX. PSI is a cytochrome c6-ferredoxin oxidoreductase, converting photonic excitation into a charge separation, which transfers an electron from the donor P700 chlorophyll pair to the spectroscopically characterized acceptors A0, A1, FX, FA and FB in turn. Oxidized P700 is reduced on the lumenal side of the thylakoid membrane by cytochrome c6. This is Photosystem I P700 chlorophyll a apoprotein A1 from Cyanophora paradoxa.